The primary structure comprises 229 residues: Transcriptional activator protein YukR (229 aa).

The HTH luxR-type domain maps to 157-222 (DTSGKGILSP…QAIRLGVELE (66 aa)). The H-T-H motif DNA-binding region spans 181–200 (YPEIALIAGITTRTVKHHMG).

It belongs to the autoinducer-regulated transcriptional regulatory protein family.

In terms of biological role, probable transcriptional activator. Binds to an autoinducer molecule. This Yersinia ruckeri protein is Transcriptional activator protein YukR (yukR).